The sequence spans 377 residues: 3-dehydroquinate synthase (377 aa).

Residues 113-117, 137-138, Lys-150, and Lys-159 contribute to the NAD(+) site; these read GVIGD and TT. Zn(2+) contacts are provided by Glu-192, His-254, and His-273.

It belongs to the sugar phosphate cyclases superfamily. Dehydroquinate synthase family. Co(2+) serves as cofactor. Requires Zn(2+) as cofactor. It depends on NAD(+) as a cofactor.

It is found in the cytoplasm. It carries out the reaction 7-phospho-2-dehydro-3-deoxy-D-arabino-heptonate = 3-dehydroquinate + phosphate. The protein operates within metabolic intermediate biosynthesis; chorismate biosynthesis; chorismate from D-erythrose 4-phosphate and phosphoenolpyruvate: step 2/7. In terms of biological role, catalyzes the conversion of 3-deoxy-D-arabino-heptulosonate 7-phosphate (DAHP) to dehydroquinate (DHQ). This chain is 3-dehydroquinate synthase, found in Bartonella tribocorum (strain CIP 105476 / IBS 506).